The following is a 284-amino-acid chain: Nucleotide-binding protein VF_0384 (284 aa).

8–15 contributes to the ATP binding site; it reads GSSGAGKS. 56–59 is a GTP binding site; it reads DIRN.

Belongs to the RapZ-like family.

Functionally, displays ATPase and GTPase activities. The polypeptide is Nucleotide-binding protein VF_0384 (Aliivibrio fischeri (strain ATCC 700601 / ES114) (Vibrio fischeri)).